We begin with the raw amino-acid sequence, 62 residues long: Bowman-Birk type proteinase inhibitor B7 (62 aa).

Cystine bridges form between cysteine 5–cysteine 59, cysteine 6–cysteine 23, cysteine 13–cysteine 21, cysteine 30–cysteine 37, and cysteine 34–cysteine 51.

The protein belongs to the Bowman-Birk serine protease inhibitor family. Expressed in bulb (at protein level).

Serine protease inhibitor. Inhibits trypsin (Ki = 65 nM) and weakly inhibits chymotrypsin (Ki = 295 nM). Does not inhibit bacterial subtilisin. This chain is Bowman-Birk type proteinase inhibitor B7, found in Hyacinthus orientalis (Common hyacinth).